A 235-amino-acid polypeptide reads, in one-letter code: tRNA pseudouridine synthase B (235 aa).

Catalysis depends on Asp-48, which acts as the Nucleophile.

It belongs to the pseudouridine synthase TruB family. Type 1 subfamily.

It carries out the reaction uridine(55) in tRNA = pseudouridine(55) in tRNA. Functionally, responsible for synthesis of pseudouridine from uracil-55 in the psi GC loop of transfer RNAs. In Parabacteroides distasonis (strain ATCC 8503 / DSM 20701 / CIP 104284 / JCM 5825 / NCTC 11152), this protein is tRNA pseudouridine synthase B.